The sequence spans 156 residues: MPRRRIVTKRNILPDPRFGSDLLAKFINILMLNGKKSTAESIVYSALDSLFRRSNKNCLEAFEIALNNVRPVVEVKSRRVGGSTYQVPVEVRLVRRNTLAMRWIIEAARKRNDKSMELRLASELLDAIEGKGHAVKKREEIHRIAESNKAFAHYRW.

Belongs to the universal ribosomal protein uS7 family. Part of the 30S ribosomal subunit. Contacts proteins S9 and S11.

In terms of biological role, one of the primary rRNA binding proteins, it binds directly to 16S rRNA where it nucleates assembly of the head domain of the 30S subunit. Is located at the subunit interface close to the decoding center, probably blocks exit of the E-site tRNA. This chain is Small ribosomal subunit protein uS7, found in Blochmanniella pennsylvanica (strain BPEN).